Reading from the N-terminus, the 596-residue chain is Elongation factor 4 (596 aa).

The tr-type G domain maps to 2–184 (KHIRNFSIIA…VIVAKIPPPE (183 aa)). Residues 14-19 (DHGKST) and 131-134 (NKID) each bind GTP.

It belongs to the TRAFAC class translation factor GTPase superfamily. Classic translation factor GTPase family. LepA subfamily.

Its subcellular location is the cell inner membrane. It carries out the reaction GTP + H2O = GDP + phosphate + H(+). Required for accurate and efficient protein synthesis under certain stress conditions. May act as a fidelity factor of the translation reaction, by catalyzing a one-codon backward translocation of tRNAs on improperly translocated ribosomes. Back-translocation proceeds from a post-translocation (POST) complex to a pre-translocation (PRE) complex, thus giving elongation factor G a second chance to translocate the tRNAs correctly. Binds to ribosomes in a GTP-dependent manner. In Shewanella sp. (strain W3-18-1), this protein is Elongation factor 4.